A 374-amino-acid polypeptide reads, in one-letter code: Succinyl-diaminopimelate desuccinylase (374 aa).

Histidine 66 is a Zn(2+) binding site. Aspartate 68 is an active-site residue. Aspartate 99 lines the Zn(2+) pocket. The Proton acceptor role is filled by glutamate 133. Zn(2+) is bound by residues glutamate 134, glutamate 162, and histidine 348.

The protein belongs to the peptidase M20A family. DapE subfamily. Homodimer. Zn(2+) serves as cofactor. The cofactor is Co(2+).

The enzyme catalyses N-succinyl-(2S,6S)-2,6-diaminopimelate + H2O = (2S,6S)-2,6-diaminopimelate + succinate. It participates in amino-acid biosynthesis; L-lysine biosynthesis via DAP pathway; LL-2,6-diaminopimelate from (S)-tetrahydrodipicolinate (succinylase route): step 3/3. In terms of biological role, catalyzes the hydrolysis of N-succinyl-L,L-diaminopimelic acid (SDAP), forming succinate and LL-2,6-diaminopimelate (DAP), an intermediate involved in the bacterial biosynthesis of lysine and meso-diaminopimelic acid, an essential component of bacterial cell walls. This Coxiella burnetii (strain RSA 331 / Henzerling II) protein is Succinyl-diaminopimelate desuccinylase.